Consider the following 344-residue polypeptide: Ferrochelatase (344 aa).

His-214 and Glu-295 together coordinate Fe cation.

This sequence belongs to the ferrochelatase family.

It is found in the cytoplasm. The enzyme catalyses heme b + 2 H(+) = protoporphyrin IX + Fe(2+). It functions in the pathway porphyrin-containing compound metabolism; protoheme biosynthesis; protoheme from protoporphyrin-IX: step 1/1. In terms of biological role, catalyzes the ferrous insertion into protoporphyrin IX. The chain is Ferrochelatase from Rhizobium etli (strain ATCC 51251 / DSM 11541 / JCM 21823 / NBRC 15573 / CFN 42).